A 306-amino-acid polypeptide reads, in one-letter code: Bifunctional protein FolD 1 (306 aa).

Residues 170–172 (GRG), Thr199, and Val240 contribute to the NADP(+) site. Residues 285 to 306 (ARRTRSSRTPVRLPDSGAPAGR) are disordered.

It belongs to the tetrahydrofolate dehydrogenase/cyclohydrolase family. Homodimer.

It catalyses the reaction (6R)-5,10-methylene-5,6,7,8-tetrahydrofolate + NADP(+) = (6R)-5,10-methenyltetrahydrofolate + NADPH. It carries out the reaction (6R)-5,10-methenyltetrahydrofolate + H2O = (6R)-10-formyltetrahydrofolate + H(+). Its pathway is one-carbon metabolism; tetrahydrofolate interconversion. In terms of biological role, catalyzes the oxidation of 5,10-methylenetetrahydrofolate to 5,10-methenyltetrahydrofolate and then the hydrolysis of 5,10-methenyltetrahydrofolate to 10-formyltetrahydrofolate. This Salinispora tropica (strain ATCC BAA-916 / DSM 44818 / JCM 13857 / NBRC 105044 / CNB-440) protein is Bifunctional protein FolD 1.